Here is a 398-residue protein sequence, read N- to C-terminus: 1-deoxy-D-xylulose 5-phosphate reductoisomerase (398 aa).

7 residues coordinate NADPH: Thr11, Gly12, Ser13, Ile14, Arg38, Asn39, and Asn125. 1-deoxy-D-xylulose 5-phosphate is bound at residue Lys126. Glu127 is an NADPH binding site. Asp151 is a binding site for Mn(2+). Residues Ser152, Glu153, Ser179, and His202 each coordinate 1-deoxy-D-xylulose 5-phosphate. Glu153 is a binding site for Mn(2+). An NADPH-binding site is contributed by Gly208. 1-deoxy-D-xylulose 5-phosphate-binding residues include Ser215, Asn220, Lys221, and Glu224. Glu224 contacts Mn(2+).

Belongs to the DXR family. Mg(2+) serves as cofactor. It depends on Mn(2+) as a cofactor.

The enzyme catalyses 2-C-methyl-D-erythritol 4-phosphate + NADP(+) = 1-deoxy-D-xylulose 5-phosphate + NADPH + H(+). It functions in the pathway isoprenoid biosynthesis; isopentenyl diphosphate biosynthesis via DXP pathway; isopentenyl diphosphate from 1-deoxy-D-xylulose 5-phosphate: step 1/6. Its function is as follows. Catalyzes the NADPH-dependent rearrangement and reduction of 1-deoxy-D-xylulose-5-phosphate (DXP) to 2-C-methyl-D-erythritol 4-phosphate (MEP). The chain is 1-deoxy-D-xylulose 5-phosphate reductoisomerase from Burkholderia cenocepacia (strain HI2424).